A 126-amino-acid chain; its full sequence is Glycine cleavage system H protein (126 aa).

One can recognise a Lipoyl-binding domain in the interval 23–104 (TLTVGITDHA…PYESWLFKIK (82 aa)). K64 is subject to N6-lipoyllysine.

It belongs to the GcvH family. As to quaternary structure, the glycine cleavage system is composed of four proteins: P, T, L and H. (R)-lipoate is required as a cofactor.

Its function is as follows. The glycine cleavage system catalyzes the degradation of glycine. The H protein shuttles the methylamine group of glycine from the P protein to the T protein. The protein is Glycine cleavage system H protein of Paraburkholderia phytofirmans (strain DSM 17436 / LMG 22146 / PsJN) (Burkholderia phytofirmans).